A 145-amino-acid chain; its full sequence is D-aminoacyl-tRNA deacylase (145 aa).

A Gly-cisPro motif, important for rejection of L-amino acids motif is present at residues 137–138; the sequence is GP.

It belongs to the DTD family. As to quaternary structure, homodimer.

Its subcellular location is the cytoplasm. It carries out the reaction glycyl-tRNA(Ala) + H2O = tRNA(Ala) + glycine + H(+). The catalysed reaction is a D-aminoacyl-tRNA + H2O = a tRNA + a D-alpha-amino acid + H(+). Functionally, an aminoacyl-tRNA editing enzyme that deacylates mischarged D-aminoacyl-tRNAs. Also deacylates mischarged glycyl-tRNA(Ala), protecting cells against glycine mischarging by AlaRS. Acts via tRNA-based rather than protein-based catalysis; rejects L-amino acids rather than detecting D-amino acids in the active site. By recycling D-aminoacyl-tRNA to D-amino acids and free tRNA molecules, this enzyme counteracts the toxicity associated with the formation of D-aminoacyl-tRNA entities in vivo and helps enforce protein L-homochirality. The protein is D-aminoacyl-tRNA deacylase of Shewanella piezotolerans (strain WP3 / JCM 13877).